The primary structure comprises 614 residues: Putative amino acid transporter AAT1 (614 aa).

11 helical membrane passes run 184–216 (VLFL…LILL), 222–243 (YITT…YGNL), 255–275 (LIDF…LILV), 295–311 (RIFI…PLTF), 318–340 (INCF…GYQS), 360–380 (HFFK…NACF), 401–417 (ILIQ…LGYL), 437–459 (SILL…NFIA), 531–547 (CAAI…EFNV), 553–575 (FIGI…LIYY), and 587–613 (RYAT…FIII).

It belongs to the amino acid/polyamine transporter 2 family.

The protein resides in the vacuole membrane. Its function is as follows. Putative amino acid transporter. Involved in maintaining the osmotic homeostasis of the digestive vacuole. Important for the timely development and growth of the asexual-stage parasites and male gametocyte maturation. This chain is Putative amino acid transporter AAT1, found in Plasmodium berghei (strain Anka).